Here is a 279-residue protein sequence, read N- to C-terminus: Probable thymidylate synthase (279 aa).

Residues arginine 21 and arginine 136 to arginine 137 each bind dUMP. Cysteine 156 (nucleophile) is an active-site residue. DUMP contacts are provided by residues arginine 177–aspartate 180, asparagine 188, and histidine 218–tyrosine 220. Aspartate 180 is a (6R)-5,10-methylene-5,6,7,8-tetrahydrofolate binding site.

It belongs to the thymidylate synthase family.

The catalysed reaction is dUMP + (6R)-5,10-methylene-5,6,7,8-tetrahydrofolate = 7,8-dihydrofolate + dTMP. In terms of biological role, sythesizes the thymine necessary for the viral DNA replication. This Escherichia coli (Enterobacteria phage T5) protein is Probable thymidylate synthase.